Here is a 64-residue protein sequence, read N- to C-terminus: Large ribosomal subunit protein bL35 (64 aa).

The interval 1–25 is disordered; the sequence is MPKLKTHSGAAKRFKKTATGKVKRS.

It belongs to the bacterial ribosomal protein bL35 family.

This is Large ribosomal subunit protein bL35 from Koribacter versatilis (strain Ellin345).